Consider the following 302-residue polypeptide: Arginase (302 aa).

Mn(2+) is bound by residues histidine 103, aspartate 126, histidine 128, and aspartate 130. Residues 128–132, 139–141, and aspartate 180 each bind substrate; these read HGDLN and SGN. Residues aspartate 229 and aspartate 231 each contribute to the Mn(2+) site. 2 residues coordinate substrate: threonine 243 and glutamate 274.

The protein belongs to the arginase family. It depends on Mn(2+) as a cofactor.

It carries out the reaction L-arginine + H2O = urea + L-ornithine. It participates in nitrogen metabolism; urea cycle; L-ornithine and urea from L-arginine: step 1/1. The protein is Arginase (arg) of Staphylococcus aureus (strain MRSA252).